Reading from the N-terminus, the 22-residue chain is Myofibril-bound serine protease (22 aa).

This sequence belongs to the peptidase S1 family. In terms of tissue distribution, detected in muscle (at protein level).

Its subcellular location is the cytoplasm. With respect to regulation, inhibited by the serine protease inhibitors, antipain, aprotinin, DFP, leupeptin, STI and TLCK, and by the cysteine proteinase inhibitors DTNB and to a lesser extent E-64. Not inhibited by the metalloproteinase inhibitor EDTA. Functionally, serine protease that selectively cleaves Arg-|-Xaa bonds. This chain is Myofibril-bound serine protease, found in Cyprinus carpio (Common carp).